The sequence spans 262 residues: uncharacterized protein (262 aa).

It belongs to the glycosyltransferase 2 family.

This is an uncharacterized protein from Mycobacterium tuberculosis (strain CDC 1551 / Oshkosh).